The following is a 149-amino-acid chain: uncharacterized protein (149 aa).

This is an uncharacterized protein from Saccharomyces cerevisiae (strain ATCC 204508 / S288c) (Baker's yeast).